The chain runs to 74 residues: ATP synthase subunit c (74 aa).

2 helical membrane passes run 9-29 (IAIA…ASIF) and 51-71 (LIGA…AILL).

Belongs to the ATPase C chain family. F-type ATPases have 2 components, F(1) - the catalytic core - and F(0) - the membrane proton channel. F(1) has five subunits: alpha(3), beta(3), gamma(1), delta(1), epsilon(1). F(0) has three main subunits: a(1), b(2) and c(10-14). The alpha and beta chains form an alternating ring which encloses part of the gamma chain. F(1) is attached to F(0) by a central stalk formed by the gamma and epsilon chains, while a peripheral stalk is formed by the delta and b chains.

Its subcellular location is the cell inner membrane. Its function is as follows. F(1)F(0) ATP synthase produces ATP from ADP in the presence of a proton or sodium gradient. F-type ATPases consist of two structural domains, F(1) containing the extramembraneous catalytic core and F(0) containing the membrane proton channel, linked together by a central stalk and a peripheral stalk. During catalysis, ATP synthesis in the catalytic domain of F(1) is coupled via a rotary mechanism of the central stalk subunits to proton translocation. In terms of biological role, key component of the F(0) channel; it plays a direct role in translocation across the membrane. A homomeric c-ring of between 10-14 subunits forms the central stalk rotor element with the F(1) delta and epsilon subunits. This is ATP synthase subunit c from Orientia tsutsugamushi (strain Ikeda) (Rickettsia tsutsugamushi).